Consider the following 157-residue polypeptide: Small ribosomal subunit protein uS7 (157 aa).

It belongs to the universal ribosomal protein uS7 family. Part of the 30S ribosomal subunit. Contacts proteins S9 and S11.

Its function is as follows. One of the primary rRNA binding proteins, it binds directly to 16S rRNA where it nucleates assembly of the head domain of the 30S subunit. Is located at the subunit interface close to the decoding center, probably blocks exit of the E-site tRNA. The sequence is that of Small ribosomal subunit protein uS7 from Chlamydia pneumoniae (Chlamydophila pneumoniae).